Consider the following 579-residue polypeptide: Thiol:disulfide interchange protein DsbD (579 aa).

Positions 1–16 (MKKLFLFFTLIFTAFA) are cleaved as a signal peptide. 2 cysteine pairs are disulfide-bonded: C124-C129 and C193-C315. 8 helical membrane-spanning segments follow: residues 178–198 (IFGF…LPML), 230–250 (LTYT…QIAL), 254–274 (YVMI…FGLF), 296–316 (GAFG…SPCT), 337–357 (AVTL…ITLF), 376–396 (FGFV…PEVW), 397–417 (ESRL…LQMS), and 420–440 (GFGY…VQPL). The Thioredoxin domain occupies 449–579 (TTTQSAVENM…AFSNWIEKLL (131 aa)). A disulfide bridge connects residues C495 and C498.

The protein belongs to the thioredoxin family. DsbD subfamily.

The protein resides in the cell inner membrane. The enzyme catalyses [protein]-dithiol + NAD(+) = [protein]-disulfide + NADH + H(+). It carries out the reaction [protein]-dithiol + NADP(+) = [protein]-disulfide + NADPH + H(+). Functionally, required to facilitate the formation of correct disulfide bonds in some periplasmic proteins and for the assembly of the periplasmic c-type cytochromes. Acts by transferring electrons from cytoplasmic thioredoxin to the periplasm. This transfer involves a cascade of disulfide bond formation and reduction steps. This Haemophilus influenzae (strain PittGG) protein is Thiol:disulfide interchange protein DsbD.